Reading from the N-terminus, the 392-residue chain is O-phospho-L-seryl-tRNA:Cys-tRNA synthase (392 aa).

Residues 84 to 85, Asn191, and 214 to 216 each bind pyridoxal 5'-phosphate; these read AR and SGH. At Lys217 the chain carries N6-(pyridoxal phosphate)lysine.

It belongs to the SepCysS family. In terms of assembly, homodimer. Interacts with SepRS. Pyridoxal 5'-phosphate is required as a cofactor.

It catalyses the reaction O-phospho-L-seryl-tRNA(Cys) + hydrogen sulfide + H(+) = L-cysteinyl-tRNA(Cys) + phosphate. In terms of biological role, converts O-phospho-L-seryl-tRNA(Cys) (Sep-tRNA(Cys)) to L-cysteinyl-tRNA(Cys) (Cys-tRNA(Cys)). This is O-phospho-L-seryl-tRNA:Cys-tRNA synthase from Methanopyrus kandleri (strain AV19 / DSM 6324 / JCM 9639 / NBRC 100938).